Consider the following 471-residue polypeptide: Serine hydroxymethyltransferase 4 (471 aa).

M1 is subject to N-acetylmethionine. S39 contributes to the L-serine binding site. Residues S39, Y59, and E61 each coordinate pemetrexed. 2 residues coordinate L-serine: E61 and Y69. Residues 105–107 (SGS), H134, S190, and H218 contribute to the pemetrexed site. 2 residues coordinate L-serine: H218 and K244. At K244 the chain carries N6-(pyridoxal phosphate)lysine. G290 is a pemetrexed binding site. K373 provides a ligand contact to methotrexate. R389 serves as a coordination point for L-serine. R389 contributes to the pemetrexed binding site.

It belongs to the SHMT family. In terms of assembly, homotetramer. Interacts with UBP16. The cofactor is pyridoxal 5'-phosphate. Mostly expressed in flowers, less abundant in roots, inflorescence stems, and siliques, and barely detectable in leaves.

It is found in the cytoplasm. It catalyses the reaction (6R)-5,10-methylene-5,6,7,8-tetrahydrofolate + glycine + H2O = (6S)-5,6,7,8-tetrahydrofolate + L-serine. The protein operates within one-carbon metabolism; tetrahydrofolate interconversion. Inhibited by the antifolate drugs methotrexate and pemetrexed. Functionally, catalyzes the interconversion of serine and glycine with the conversion of tetrahydrofolate (THF) into 5,10-methylene-THF. The sequence is that of Serine hydroxymethyltransferase 4 from Arabidopsis thaliana (Mouse-ear cress).